Reading from the N-terminus, the 1083-residue chain is Neisserial autotransporter lipoprotein NalP (1083 aa).

The first 27 residues, 1 to 27, serve as a signal peptide directing secretion; it reads MRTTPTFPTKTFKPTAMALAVATTLSA. C28 carries the N-palmitoyl cysteine lipid modification. C28 carries S-diacylglycerol cysteine lipidation. In terms of domain architecture, Peptidase S8 spans 111-483; sequence NDAYKNLINL…WGLLDAGKAM (373 aa). Catalysis depends on charge relay system residues D139, H211, and S427. Positions 809 to 1083 constitute an Autotransporter domain; that stretch reads DGLDHNGTGL…SGRVGVGYRF (275 aa). The next 12 beta stranded transmembrane spans lie at 819–828, 844–852, 858–866, 883–891, 897–906, 931–941, 948–958, 984–994, 1000–1010, 1041–1052, 1057–1066, and 1074–1083; these read RVIAQTQQDG, TQTVGIAAK, TAAATLGMG, SLFAGIRHD, YLKGLFSYGR, QLGALGGVNVP, LTVEGGLRYDL, VGLAGLKLSQP, VLFATAGVERD, RLVAGLGADVEF, NGLARYSYAG, and SGRVGVGYRF.

It belongs to the peptidase S8 family. Post-translationally, a fusion protein of the first 44 residues with beta-lactamase is lipidated in E.coli, strongly suggesting this is a lipoprotein in situ. The lipidated form is briefly retained on the cell surface which allows it to process its endogenous substrates on the cell surface before the passenger domain is released into the medium.

The protein resides in the cell outer membrane. It is found in the cell surface. Its subcellular location is the secreted. Major human immunogenic protein. Autotransporter with a secreted protease domain involved in processing other autotransporter proteins including App and IgA. Probably autoprocesses to release the about 70 kDa passenger domain. Processes the lactoferrin receptor lipoprotein subunit (LbpB) extracellularly, releasing it from the cell surface. LbpB release protects bacteria against complement-mediated killing by anti-LbpB antibodies. Processes NHBA. Lipidation slows its auto-processing, probably allowing it to act on endogenous substrates on the cell surface before the passenger domain is released into the medium. The C-terminal beta-barrel domain inserts into the outer membrane where it probably exports the N-terminal passenger domain. Both the cell surface protein (Neisserial autotransporter lipoprotein NalP) and the passenger domain cleave human (host) complement factor C3, generating a shorter alpha chain and a longer beta chain than normal. Its function is as follows. Plays a role in extracellular-DNA (eDNA) mediated biofilm formation. In some strains (including cc32 strain H44/76 but not cc11 strain B16B6) eDNA stimulates biofilm formation. When NalP is not expressed (and no longer processes NHBA or IgA) biofilm formation increases. This is probably because the number of positively charged, DNA-binding peptides on the cell surface rises, resulting in increased biofilm formation. In terms of biological role, cleaves human (host) complement factor C3, generating a shorter alpha chain and a longer beta chain than normal. Does not act on mouse or rabbit C3. Cleavage causes C3b degradation by human CFI and CFH, decreases deposition of C3b on the bacteria surface and probably facilitates complement escape. This chain is Neisserial autotransporter lipoprotein NalP, found in Neisseria meningitidis serogroup B / serotype 15 (strain H44/76).